Here is a 103-residue protein sequence, read N- to C-terminus: Small ribosomal subunit protein uS10 (103 aa).

This sequence belongs to the universal ribosomal protein uS10 family. Part of the 30S ribosomal subunit.

In terms of biological role, involved in the binding of tRNA to the ribosomes. This chain is Small ribosomal subunit protein uS10, found in Haemophilus ducreyi (strain 35000HP / ATCC 700724).